Reading from the N-terminus, the 270-residue chain is Putative postmeiotic segregation increased 2-like protein 11 (270 aa).

Belongs to the DNA mismatch repair MutL/HexB family.

This Homo sapiens (Human) protein is Putative postmeiotic segregation increased 2-like protein 11 (PMS2P11).